The chain runs to 637 residues: Early transcription factor 70 kDa subunit (637 aa).

Positions 32 to 185 constitute a Helicase ATP-binding domain; the sequence is RTIIDENRSV…GHIIDLMSEE (154 aa). 45-52 is an ATP binding site; it reads HIMGSGKT. The short motif at 135 to 138 is the DEXH box element; it reads DKAH. Positions 327–507 constitute a Helicase C-terminal domain; the sequence is KFKYFINRIQ…VLPFDIKKLL (181 aa).

The protein belongs to the helicase family. VETF subfamily. In terms of assembly, heterodimer of a 70 kDa and a 82 kDa subunit. Part of the early transcription complex composed of ETF, RAP94/OPG109, and the DNA-directed RNA polymerase.

Its subcellular location is the virion. Its function is as follows. Acts with RNA polymerase to initiate transcription from early gene promoters. Is recruited by the RPO-associated protein of 94 kDa RAP94/OPG109 to form the early transcription complex, which also contains the core RNA polymerase. ETF heterodimer binds to early gene promoters. The polypeptide is Early transcription factor 70 kDa subunit (OPG118) (Homo sapiens (Human)).